Reading from the N-terminus, the 264-residue chain is Tryptophan synthase alpha chain (264 aa).

Active-site proton acceptor residues include glutamate 49 and aspartate 60.

This sequence belongs to the TrpA family. As to quaternary structure, tetramer of two alpha and two beta chains.

It catalyses the reaction (1S,2R)-1-C-(indol-3-yl)glycerol 3-phosphate + L-serine = D-glyceraldehyde 3-phosphate + L-tryptophan + H2O. Its pathway is amino-acid biosynthesis; L-tryptophan biosynthesis; L-tryptophan from chorismate: step 5/5. In terms of biological role, the alpha subunit is responsible for the aldol cleavage of indoleglycerol phosphate to indole and glyceraldehyde 3-phosphate. This chain is Tryptophan synthase alpha chain, found in Geotalea daltonii (strain DSM 22248 / JCM 15807 / FRC-32) (Geobacter daltonii).